The chain runs to 160 residues: Epithelial membrane protein 1 (160 aa).

A helical transmembrane segment spans residues 1–21; sequence MLVLLAAIFVVHIATCVMLFV. N-linked (GlcNAc...) asparagine glycans are attached at residues Asn35 and Asn43. The next 3 membrane-spanning stretches (helical) occupy residues 67–87, 95–115, and 137–157; these read FMIL…FQLF, FFLS…GASI, and FILA…YLVL.

It belongs to the PMP-22/EMP/MP20 family. As to expression, most abundant in squamous epithelia.

The protein resides in the membrane. This chain is Epithelial membrane protein 1 (EMP1), found in Oryctolagus cuniculus (Rabbit).